We begin with the raw amino-acid sequence, 348 residues long: Protein RecA (348 aa).

66 to 73 is a binding site for ATP; it reads GPESSGKT.

This sequence belongs to the RecA family.

The protein resides in the cytoplasm. Its function is as follows. Can catalyze the hydrolysis of ATP in the presence of single-stranded DNA, the ATP-dependent uptake of single-stranded DNA by duplex DNA, and the ATP-dependent hybridization of homologous single-stranded DNAs. It interacts with LexA causing its activation and leading to its autocatalytic cleavage. This Legionella pneumophila protein is Protein RecA.